A 67-amino-acid chain; its full sequence is Probable archaeal histone 3 (67 aa).

Interaction with DNA regions lie at residues 20–22 and 54–57; these read RVS and KTVK.

It belongs to the archaeal histone HMF family. As to quaternary structure, homodimer or heterodimer with another histone. Dimers then assemble into higher oligomers, with the DNA wrapped around the protein core.

The protein localises to the cytoplasm. The protein resides in the chromosome. Its function is as follows. Binds and compact DNA (95 to 150 base pairs) to form nucleosome-like structures that contain positive DNA supercoils. Increases the resistance of DNA to thermal denaturation (in vitro). The polypeptide is Probable archaeal histone 3 (Methanocaldococcus jannaschii (strain ATCC 43067 / DSM 2661 / JAL-1 / JCM 10045 / NBRC 100440) (Methanococcus jannaschii)).